The primary structure comprises 118 residues: Ribosome-binding factor A (118 aa).

This sequence belongs to the RbfA family. As to quaternary structure, monomer. Binds 30S ribosomal subunits, but not 50S ribosomal subunits or 70S ribosomes.

It localises to the cytoplasm. Functionally, one of several proteins that assist in the late maturation steps of the functional core of the 30S ribosomal subunit. Associates with free 30S ribosomal subunits (but not with 30S subunits that are part of 70S ribosomes or polysomes). Required for efficient processing of 16S rRNA. May interact with the 5'-terminal helix region of 16S rRNA. The chain is Ribosome-binding factor A from Geobacter sulfurreducens (strain ATCC 51573 / DSM 12127 / PCA).